A 354-amino-acid polypeptide reads, in one-letter code: UDP-N-acetylglucosamine--N-acetylmuramyl-(pentapeptide) pyrophosphoryl-undecaprenol N-acetylglucosamine transferase (354 aa).

Residues 15–17 (TGG), Asn127, Arg163, Ser191, Ile244, 263–268 (ALTVSE), and Gln288 each bind UDP-N-acetyl-alpha-D-glucosamine.

The protein belongs to the glycosyltransferase 28 family. MurG subfamily.

The protein resides in the cell inner membrane. It catalyses the reaction di-trans,octa-cis-undecaprenyl diphospho-N-acetyl-alpha-D-muramoyl-L-alanyl-D-glutamyl-meso-2,6-diaminopimeloyl-D-alanyl-D-alanine + UDP-N-acetyl-alpha-D-glucosamine = di-trans,octa-cis-undecaprenyl diphospho-[N-acetyl-alpha-D-glucosaminyl-(1-&gt;4)]-N-acetyl-alpha-D-muramoyl-L-alanyl-D-glutamyl-meso-2,6-diaminopimeloyl-D-alanyl-D-alanine + UDP + H(+). It functions in the pathway cell wall biogenesis; peptidoglycan biosynthesis. In terms of biological role, cell wall formation. Catalyzes the transfer of a GlcNAc subunit on undecaprenyl-pyrophosphoryl-MurNAc-pentapeptide (lipid intermediate I) to form undecaprenyl-pyrophosphoryl-MurNAc-(pentapeptide)GlcNAc (lipid intermediate II). In Aliivibrio salmonicida (strain LFI1238) (Vibrio salmonicida (strain LFI1238)), this protein is UDP-N-acetylglucosamine--N-acetylmuramyl-(pentapeptide) pyrophosphoryl-undecaprenol N-acetylglucosamine transferase.